The chain runs to 399 residues: uncharacterized protein (399 aa).

The protein belongs to the AdoMet synthetase 2 family.

This is an uncharacterized protein from Streptococcus pyogenes serotype M1.